The following is a 360-amino-acid chain: Probable dual-specificity RNA methyltransferase RlmN (360 aa).

Glu-91 serves as the catalytic Proton acceptor. Residues 97–335 enclose the Radical SAM core domain; that stretch reads QHYGQSVCVT…CVVRQEHGTD (239 aa). A disulfide bridge links Cys-104 with Cys-340. [4Fe-4S] cluster contacts are provided by Cys-111, Cys-115, and Cys-118. S-adenosyl-L-methionine contacts are provided by residues 163–164, Ser-195, 218–220, and Asn-296; these read GE and SLH. Cys-340 acts as the S-methylcysteine intermediate in catalysis.

It belongs to the radical SAM superfamily. RlmN family. The cofactor is [4Fe-4S] cluster.

It is found in the cytoplasm. It catalyses the reaction adenosine(2503) in 23S rRNA + 2 reduced [2Fe-2S]-[ferredoxin] + 2 S-adenosyl-L-methionine = 2-methyladenosine(2503) in 23S rRNA + 5'-deoxyadenosine + L-methionine + 2 oxidized [2Fe-2S]-[ferredoxin] + S-adenosyl-L-homocysteine. It carries out the reaction adenosine(37) in tRNA + 2 reduced [2Fe-2S]-[ferredoxin] + 2 S-adenosyl-L-methionine = 2-methyladenosine(37) in tRNA + 5'-deoxyadenosine + L-methionine + 2 oxidized [2Fe-2S]-[ferredoxin] + S-adenosyl-L-homocysteine. Specifically methylates position 2 of adenine 2503 in 23S rRNA and position 2 of adenine 37 in tRNAs. This chain is Probable dual-specificity RNA methyltransferase RlmN, found in Streptococcus equi subsp. zooepidemicus (strain MGCS10565).